A 275-amino-acid chain; its full sequence is F-box only protein 50 (275 aa).

A disordered region spans residues 1 to 67 (MEEVREGHAL…LPEPAQPSEA (67 aa)). The span at 26 to 62 (PPSPRSPSPPPSPPPLPSPPSLPSPAAPEAPELPEPA) shows a compositional bias: pro residues. Ser31, Ser37, and Ser49 each carry phosphoserine. Positions 95 to 273 (LLLRRPLYRN…VTDSSVSVQL (179 aa)) constitute an FBA domain.

In terms of tissue distribution, expressed in the esophagus, oral cavity, skin, tongue and reproductive organs.

It is found in the cytoplasm. In terms of biological role, promotes cell proliferation. This is F-box only protein 50 (NCCRP1) from Homo sapiens (Human).